A 121-amino-acid polypeptide reads, in one-letter code: Large ribosomal subunit protein uL22 (121 aa).

This sequence belongs to the universal ribosomal protein uL22 family. In terms of assembly, part of the 50S ribosomal subunit.

Its function is as follows. This protein binds specifically to 23S rRNA; its binding is stimulated by other ribosomal proteins, e.g. L4, L17, and L20. It is important during the early stages of 50S assembly. It makes multiple contacts with different domains of the 23S rRNA in the assembled 50S subunit and ribosome. Functionally, the globular domain of the protein is located near the polypeptide exit tunnel on the outside of the subunit, while an extended beta-hairpin is found that lines the wall of the exit tunnel in the center of the 70S ribosome. In Synechococcus sp. (strain CC9605), this protein is Large ribosomal subunit protein uL22.